An 88-amino-acid chain; its full sequence is Large ribosomal subunit protein bL27 (88 aa).

Residues 1–13 (MATKKSGGSSSNG) show a composition bias toward low complexity. Residues 1 to 24 (MATKKSGGSSSNGRDSRGRRLGVK) form a disordered region.

Belongs to the bacterial ribosomal protein bL27 family.

The protein is Large ribosomal subunit protein bL27 of Ehrlichia ruminantium (strain Gardel).